The sequence spans 205 residues: Protein DEPP1 (205 aa).

2 stretches are compositionally biased toward polar residues: residues 55–64 (DKVTAQSRPN) and 83–101 (GDSS…SPGT). Residues 55–171 (DKVTAQSRPN…RHQTSDLKSW (117 aa)) form a disordered region. The segment covering 138–155 (MGKDTGRLCEARVPEHSL) has biased composition (basic and acidic residues).

Its subcellular location is the cytoplasm. The protein resides in the peroxisome. The protein localises to the mitochondrion. Functionally, acts as a critical modulator of FOXO3-induced autophagy via increased cellular ROS. The sequence is that of Protein DEPP1 (Depp1) from Mus musculus (Mouse).